A 289-amino-acid polypeptide reads, in one-letter code: 4-hydroxy-tetrahydrodipicolinate synthase (289 aa).

A pyruvate-binding site is contributed by T43. Catalysis depends on Y131, which acts as the Proton donor/acceptor. K160 serves as the catalytic Schiff-base intermediate with substrate. Residue V200 participates in pyruvate binding.

This sequence belongs to the DapA family. Homotetramer; dimer of dimers.

Its subcellular location is the cytoplasm. The catalysed reaction is L-aspartate 4-semialdehyde + pyruvate = (2S,4S)-4-hydroxy-2,3,4,5-tetrahydrodipicolinate + H2O + H(+). Its pathway is amino-acid biosynthesis; L-lysine biosynthesis via DAP pathway; (S)-tetrahydrodipicolinate from L-aspartate: step 3/4. Functionally, catalyzes the condensation of (S)-aspartate-beta-semialdehyde [(S)-ASA] and pyruvate to 4-hydroxy-tetrahydrodipicolinate (HTPA). This Methanococcus maripaludis (strain C6 / ATCC BAA-1332) protein is 4-hydroxy-tetrahydrodipicolinate synthase.